We begin with the raw amino-acid sequence, 116 residues long: Cell cycle protein GpsB (116 aa).

Residues 32 to 69 (LDDVIKDYETYSALVKELREENSRLKQELSKRMQEAPN) are a coiled coil. A disordered region spans residues 57-78 (KQELSKRMQEAPNSTASQVHQS). Residues 67–78 (APNSTASQVHQS) show a composition bias toward polar residues.

It belongs to the GpsB family. Forms polymers through the coiled coil domains. Interacts with PBP1, MreC and EzrA.

The protein localises to the cytoplasm. In terms of biological role, divisome component that associates with the complex late in its assembly, after the Z-ring is formed, and is dependent on DivIC and PBP2B for its recruitment to the divisome. Together with EzrA, is a key component of the system that regulates PBP1 localization during cell cycle progression. Its main role could be the removal of PBP1 from the cell pole after pole maturation is completed. Also contributes to the recruitment of PBP1 to the division complex. Not essential for septum formation. The sequence is that of Cell cycle protein GpsB from Streptococcus gordonii (strain Challis / ATCC 35105 / BCRC 15272 / CH1 / DL1 / V288).